We begin with the raw amino-acid sequence, 195 residues long: ATP-dependent Clp protease proteolytic subunit 2 (195 aa).

Ser-92 serves as the catalytic Nucleophile. Residue His-117 is part of the active site.

It belongs to the peptidase S14 family. In terms of assembly, fourteen ClpP subunits assemble into 2 heptameric rings which stack back to back to give a disk-like structure with a central cavity, resembling the structure of eukaryotic proteasomes.

Its subcellular location is the cytoplasm. It carries out the reaction Hydrolysis of proteins to small peptides in the presence of ATP and magnesium. alpha-casein is the usual test substrate. In the absence of ATP, only oligopeptides shorter than five residues are hydrolyzed (such as succinyl-Leu-Tyr-|-NHMec, and Leu-Tyr-Leu-|-Tyr-Trp, in which cleavage of the -Tyr-|-Leu- and -Tyr-|-Trp bonds also occurs).. In terms of biological role, cleaves peptides in various proteins in a process that requires ATP hydrolysis. Has a chymotrypsin-like activity. Plays a major role in the degradation of misfolded proteins. The protein is ATP-dependent Clp protease proteolytic subunit 2 of Rhodococcus jostii (strain RHA1).